The primary structure comprises 840 residues: Homeobox-leucine zipper protein HOX9 (840 aa).

Disordered stretches follow at residues 1–26 (MAAA…AGMD) and 135–160 (NPSL…DASN). Gly residues predominate over residues 12–21 (GSDGGGGGYD). Positions 26-89 (DSGKYVRYTP…NRRCRDKQRK (64 aa)) form a DNA-binding region, homeobox. Residues 86–135 (KQRKEASRLQAVNRKLTAMNKLLMEENERLQKQVSQLVHENAYMKQQLQN) adopt a coiled-coil conformation. The START domain maps to 157–385 (DASNPSGLLT…IAQETSGEVV (229 aa)).

The protein belongs to the HD-ZIP homeobox family. Class III subfamily. Expressed in seedlings, roots, stems, leaf sheaths and blades and panicles.

The protein resides in the nucleus. In terms of biological role, probable transcription factor. The sequence is that of Homeobox-leucine zipper protein HOX9 (HOX9) from Oryza sativa subsp. indica (Rice).